A 213-amino-acid polypeptide reads, in one-letter code: Probable nicotinate-nucleotide adenylyltransferase (213 aa).

Belongs to the NadD family.

The catalysed reaction is nicotinate beta-D-ribonucleotide + ATP + H(+) = deamido-NAD(+) + diphosphate. It participates in cofactor biosynthesis; NAD(+) biosynthesis; deamido-NAD(+) from nicotinate D-ribonucleotide: step 1/1. Catalyzes the reversible adenylation of nicotinate mononucleotide (NaMN) to nicotinic acid adenine dinucleotide (NaAD). The protein is Probable nicotinate-nucleotide adenylyltransferase of Escherichia coli O45:K1 (strain S88 / ExPEC).